A 363-amino-acid polypeptide reads, in one-letter code: MGFRLSHLSLALSFVALALAGVAIYRNTYEAIIMNNGSLLQNASPHFDSLESGVASILTLNNKKRNSDMYLRQQLTPEACVFSAVRGVVDSAIDAETRMGASLIRLHFHDCFVDGCDGGILLDDINGTFTGEQNSPPNANSARGYEVIAQAKQSVIDTCPNISVSCADILAIAARDSVAKLGGQTYNVALGRSDARTANFTGALTQLPAPFDNLTVQIQKFNDKNFTLREMVALAGAHTVGFARCSTVCTSGNVNPAAQLQCNCSATLTDSDLQQLDTTPTMFDKVYYDNLNNNQGIMFSDQVLTGDATTAGFVTDYSNDVSVFLGDFAAAMIKMGDLPPSAGAQLEIRDVCSRVNPTSVASM.

Positions M1 to A20 are cleaved as a signal peptide. The N-linked (GlcNAc...) asparagine glycan is linked to N36. Disulfide bonds link C80/C159 and C111/C116. H109 serves as the catalytic Proton acceptor. Residues D110, V113, G115, and D117 each coordinate Ca(2+). N-linked (GlcNAc...) asparagine glycans are attached at residues N126, N161, and N199. Disulfide bonds link C166–C352 and C245–C264. P208 lines the substrate pocket. N213 and N225 each carry an N-linked (GlcNAc...) asparagine glycan. H238 lines the heme b pocket. Residue T239 participates in Ca(2+) binding. The N-linked (GlcNAc...) asparagine glycan is linked to N263. Ca(2+) contacts are provided by D277, T279, and D284.

It belongs to the peroxidase family. Classical plant (class III) peroxidase subfamily. The cofactor is Ca(2+). Heme b is required as a cofactor.

Its subcellular location is the secreted. It catalyses the reaction 2 a phenolic donor + H2O2 = 2 a phenolic radical donor + 2 H2O. Removal of H(2)O(2), oxidation of toxic reductants, biosynthesis and degradation of lignin, suberization, auxin catabolism, response to environmental stresses such as wounding, pathogen attack and oxidative stress. These functions might be dependent on each isozyme/isoform in each plant tissue. Its function is as follows. Suggested to catalyze the deposition of the aromatic residues of suberin on the cell wall and thus play a role in cell-suberization. The chain is Suberization-associated anionic peroxidase from Solanum tuberosum (Potato).